We begin with the raw amino-acid sequence, 357 residues long: Glutamate 5-kinase (357 aa).

Lysine 7 is an ATP binding site. 3 residues coordinate substrate: serine 43, aspartate 130, and asparagine 142. ATP contacts are provided by residues 162–163 and 205–211; these read TD and TGGMTTK. The PUA domain occupies 270 to 341; the sequence is EGELCLDQGA…QALSVVTDAE (72 aa).

The protein belongs to the glutamate 5-kinase family.

It is found in the cytoplasm. It carries out the reaction L-glutamate + ATP = L-glutamyl 5-phosphate + ADP. The protein operates within amino-acid biosynthesis; L-proline biosynthesis; L-glutamate 5-semialdehyde from L-glutamate: step 1/2. In terms of biological role, catalyzes the transfer of a phosphate group to glutamate to form L-glutamate 5-phosphate. The polypeptide is Glutamate 5-kinase (Synechococcus sp. (strain CC9902)).